A 306-amino-acid polypeptide reads, in one-letter code: Putative F-box protein At1g47300 (306 aa).

Residues 1–45 form the F-box domain; sequence MISDSIPKELILEIMLRLPAKSIARFHCVSKQWASMLSRPYFTEL. Residues 235–278 are disordered; the sequence is DPKLLESKEEEEEEEEEEEEEEEEEEEEEEEEEEEESKEREKEK. Acidic residues predominate over residues 242 to 270; the sequence is KEEEEEEEEEEEEEEEEEEEEEEEEEEEE.

The protein is Putative F-box protein At1g47300 of Arabidopsis thaliana (Mouse-ear cress).